We begin with the raw amino-acid sequence, 150 residues long: Protein-arginine-phosphatase (150 aa).

The active-site Nucleophile is Cys7. 8-13 (TGNTCR) is a binding site for substrate. Residue Arg13 is part of the active site. Residue Asp118 is the Proton donor/acceptor of the active site.

The protein belongs to the low molecular weight phosphotyrosine protein phosphatase family.

It carries out the reaction N(omega)-phospho-L-arginyl-[protein] + H2O = L-arginyl-[protein] + phosphate. With respect to regulation, efficiently inhibited by Cu(2+) ion, Zn(2+) ion, sodium pyrophosphate and N-ethylmaleimide, while the addition of Mg(2+), Ca(2+) or Fe(3+) ions has minimal effect. Inhibited in a competitive manner by vanadate. Its function is as follows. Catalyzes the specific dephosphorylation of phosphoarginine residues in a large number of proteins. Counteracts the protein arginine kinase McsB in vivo. Can dephosphorylate CtsR-P; thus, can restore the DNA-binding ability of the CtsR repressor by reversing the McsB-mediated phosphorylation. Is the only active pArg phosphatase present in B.subtilis. Exhibits almost no activity against pSer, pThr, or pTyr peptides. Appears to play a role in B.subtilis stress resistance. Protein arginine phosphorylation has a physiologically important role and is involved in the regulation of many critical cellular processes, such as protein homeostasis, motility, competence, and stringent and stress responses, by regulating gene expression and protein activity. This is Protein-arginine-phosphatase (ywlE) from Bacillus subtilis (strain 168).